The following is a 380-amino-acid chain: Queuine tRNA-ribosyltransferase (380 aa).

The active-site Proton acceptor is D89. Substrate contacts are provided by residues 89 to 93 (DSGGF), D143, Q187, and G214. Residues 245–251 (GVGKPED) form an RNA binding region. The active-site Nucleophile is D264. The interval 269–273 (TRNAR) is RNA binding; important for wobble base 34 recognition. Zn(2+) contacts are provided by C302, C304, C307, and H333.

Belongs to the queuine tRNA-ribosyltransferase family. Homodimer. Within each dimer, one monomer is responsible for RNA recognition and catalysis, while the other monomer binds to the replacement base PreQ1. Zn(2+) serves as cofactor.

It carries out the reaction 7-aminomethyl-7-carbaguanine + guanosine(34) in tRNA = 7-aminomethyl-7-carbaguanosine(34) in tRNA + guanine. The protein operates within tRNA modification; tRNA-queuosine biosynthesis. Its function is as follows. Catalyzes the base-exchange of a guanine (G) residue with the queuine precursor 7-aminomethyl-7-deazaguanine (PreQ1) at position 34 (anticodon wobble position) in tRNAs with GU(N) anticodons (tRNA-Asp, -Asn, -His and -Tyr). Catalysis occurs through a double-displacement mechanism. The nucleophile active site attacks the C1' of nucleotide 34 to detach the guanine base from the RNA, forming a covalent enzyme-RNA intermediate. The proton acceptor active site deprotonates the incoming PreQ1, allowing a nucleophilic attack on the C1' of the ribose to form the product. After dissociation, two additional enzymatic reactions on the tRNA convert PreQ1 to queuine (Q), resulting in the hypermodified nucleoside queuosine (7-(((4,5-cis-dihydroxy-2-cyclopenten-1-yl)amino)methyl)-7-deazaguanosine). The polypeptide is Queuine tRNA-ribosyltransferase (Proteus mirabilis (strain HI4320)).